Here is a 142-residue protein sequence, read N- to C-terminus: ATP synthase epsilon chain (142 aa).

Belongs to the ATPase epsilon chain family. As to quaternary structure, F-type ATPases have 2 components, CF(1) - the catalytic core - and CF(0) - the membrane proton channel. CF(1) has five subunits: alpha(3), beta(3), gamma(1), delta(1), epsilon(1). CF(0) has three main subunits: a, b and c.

Its subcellular location is the cell inner membrane. Its function is as follows. Produces ATP from ADP in the presence of a proton gradient across the membrane. The chain is ATP synthase epsilon chain from Shewanella sp. (strain ANA-3).